The chain runs to 824 residues: Leucine--tRNA ligase (824 aa).

The 'HIGH' region signature appears at 42–52 (PYPSGHLHMGH). A 'KMSKS' region motif is present at residues 581–585 (KMSKS). Residue K584 coordinates ATP.

This sequence belongs to the class-I aminoacyl-tRNA synthetase family.

Its subcellular location is the cytoplasm. It carries out the reaction tRNA(Leu) + L-leucine + ATP = L-leucyl-tRNA(Leu) + AMP + diphosphate. The polypeptide is Leucine--tRNA ligase (Syntrophomonas wolfei subsp. wolfei (strain DSM 2245B / Goettingen)).